The sequence spans 906 residues: Alanine--tRNA ligase, chloroplastic/mitochondrial (906 aa).

Residues 1–10 are compositionally biased toward basic and acidic residues; sequence MSAATERERL. A disordered region spans residues 1 to 22; sequence MSAATERERLTNANPNARGKDN. The Zn(2+) site is built by His589, His593, Cys691, and His695.

This sequence belongs to the class-II aminoacyl-tRNA synthetase family. As to quaternary structure, monomer. Requires Zn(2+) as cofactor.

It localises to the plastid. It is found in the chloroplast. Its subcellular location is the mitochondrion. The enzyme catalyses tRNA(Ala) + L-alanine + ATP = L-alanyl-tRNA(Ala) + AMP + diphosphate. Its function is as follows. Catalyzes the attachment of alanine to tRNA(Ala) in a two-step reaction: alanine is first activated by ATP to form Ala-AMP and then transferred to the acceptor end of tRNA(Ala). Also edits incorrectly charged tRNA(Ala) via its editing domain. The sequence is that of Alanine--tRNA ligase, chloroplastic/mitochondrial from Ostreococcus lucimarinus (strain CCE9901).